The chain runs to 169 residues: MERAIFAGGCFWCMVQPFEELDGIVSVRSGYTGGHVPNPSYEQVCSKTTGHTEAVEIIFDPQKIDYSDLVELYWQQTDPTDAFGQFEDRGDNYRPVIFYFDERQKEIAEQSRENLQLSGRFQDPIVTQIEEAQPFYLAEDYHQAFYRKNPERYAQSSKQRHDFLEENWH.

Cys10 is a catalytic residue.

Belongs to the MsrA Met sulfoxide reductase family.

It catalyses the reaction L-methionyl-[protein] + [thioredoxin]-disulfide + H2O = L-methionyl-(S)-S-oxide-[protein] + [thioredoxin]-dithiol. It carries out the reaction [thioredoxin]-disulfide + L-methionine + H2O = L-methionine (S)-S-oxide + [thioredoxin]-dithiol. Functionally, has an important function as a repair enzyme for proteins that have been inactivated by oxidation. Catalyzes the reversible oxidation-reduction of methionine sulfoxide in proteins to methionine. The sequence is that of Peptide methionine sulfoxide reductase MsrA from Streptococcus uberis (strain ATCC BAA-854 / 0140J).